Reading from the N-terminus, the 291-residue chain is Heterogeneous nuclear ribonucleoprotein D-like-B (291 aa).

2 consecutive RRM domains span residues 34-116 (SKMF…QGKE) and 119-196 (KKVF…AAQP). The interval 196–226 (PKEVYRQQQQKQQKGGRGGTRGRGRGQGYSN) is disordered. Over residues 210–222 (GGRGGTRGRGRGQ) the composition is skewed to gly residues.

It is found in the nucleus. Its subcellular location is the cytoplasm. Functionally, acts as a transcriptional regulator. Binds DNA and RNA. This chain is Heterogeneous nuclear ribonucleoprotein D-like-B (hnrnpdl-b), found in Xenopus laevis (African clawed frog).